Here is a 478-residue protein sequence, read N- to C-terminus: G2/mitotic-specific cyclin-B (478 aa).

The disordered stretch occupies residues 1–153 (MNENDENGPS…KTIQQEEPPR (153 aa)). Over residues 16 to 31 (AKAAALTTDAPAANGA) the composition is skewed to low complexity. Residues 65–74 (DNGETKDAKK) show a composition bias toward basic and acidic residues. Polar residues predominate over residues 77-102 (SKTGLTSKATMQSGGVQKLSRSNLSR). Residues 110-121 (NNVKKPATEAKR) show a composition bias toward basic and acidic residues. Positions 133-145 (KRTSSQKSLQEKT) are enriched in polar residues.

The protein belongs to the cyclin family. Cyclin AB subfamily.

Its function is as follows. Essential for the control of the cell cycle at the G2/M (mitosis) transition. Interacts with the CDC2 protein kinase to form MPF. G2/M cyclins accumulate steadily during G2 and are abruptly destroyed at mitosis. This chain is G2/mitotic-specific cyclin-B (nimE), found in Emericella nidulans (strain FGSC A4 / ATCC 38163 / CBS 112.46 / NRRL 194 / M139) (Aspergillus nidulans).